The primary structure comprises 196 residues: Chromophore lyase CpcT/CpeT (196 aa).

This sequence belongs to the CpcT/CpeT biliprotein lyase family.

Functionally, covalently attaches a chromophore to Cys residue(s) of phycobiliproteins. The polypeptide is Chromophore lyase CpcT/CpeT (Thermosynechococcus vestitus (strain NIES-2133 / IAM M-273 / BP-1)).